The sequence spans 174 residues: Thioredoxin O, mitochondrial (174 aa).

A mitochondrion-targeting transit peptide spans 1-59 (MALAHRLCRLPRLLPLAAAAAASKPYLPGKPSPAPPPPLSSPPPFPSLSRLFSTTPSSS). The Thioredoxin domain occupies 60–172 (GDSSMVVVGS…LESTMESLHK (113 aa)). Active-site nucleophile residues include Cys-96 and Cys-99. A disulfide bridge links Cys-96 with Cys-99.

Belongs to the thioredoxin family. Plant O-type subfamily.

Its subcellular location is the mitochondrion. In terms of biological role, probable thiol-disulfide oxidoreductase that may participate in various redox reactions. This is Thioredoxin O, mitochondrial from Oryza sativa subsp. japonica (Rice).